Consider the following 433-residue polypeptide: Signal recognition particle 54 kDa protein (433 aa).

GTP is bound by residues 106-113, 186-190, and 244-247; these read GVEGSGKT, DTAGR, and TKMD.

This sequence belongs to the GTP-binding SRP family. SRP54 subfamily. Part of the signal recognition particle protein translocation system, which is composed of SRP and FtsY. Archaeal SRP consists of a 7S RNA molecule of 300 nucleotides and two protein subunits: SRP54 and SRP19.

The protein resides in the cytoplasm. It carries out the reaction GTP + H2O = GDP + phosphate + H(+). Its function is as follows. Involved in targeting and insertion of nascent membrane proteins into the cytoplasmic membrane. Binds to the hydrophobic signal sequence of the ribosome-nascent chain (RNC) as it emerges from the ribosomes. The SRP-RNC complex is then targeted to the cytoplasmic membrane where it interacts with the SRP receptor FtsY. The sequence is that of Signal recognition particle 54 kDa protein from Pyrobaculum arsenaticum (strain DSM 13514 / JCM 11321 / PZ6).